The sequence spans 539 residues: GMP synthase [glutamine-hydrolyzing] (539 aa).

The 200-residue stretch at 4–203 (KILILDFGSQ…VHDICGCKSD (200 aa)) folds into the Glutamine amidotransferase type-1 domain. Cys-82 (nucleophile) is an active-site residue. Residues His-177 and Glu-179 contribute to the active site. Residues 204 to 395 (WNMPDYIAEA…LGLPHDMVYR (192 aa)) form the GMPS ATP-PPase domain. An ATP-binding site is contributed by 231 to 237 (SGGVDSS).

As to quaternary structure, homodimer.

It carries out the reaction XMP + L-glutamine + ATP + H2O = GMP + L-glutamate + AMP + diphosphate + 2 H(+). It functions in the pathway purine metabolism; GMP biosynthesis; GMP from XMP (L-Gln route): step 1/1. Functionally, catalyzes the synthesis of GMP from XMP. The protein is GMP synthase [glutamine-hydrolyzing] of Herminiimonas arsenicoxydans.